Reading from the N-terminus, the 220-residue chain is DNA mismatch repair protein MutH (220 aa).

Belongs to the MutH family.

Its subcellular location is the cytoplasm. Functionally, sequence-specific endonuclease that cleaves unmethylated GATC sequences. It is involved in DNA mismatch repair. The polypeptide is DNA mismatch repair protein MutH (Buchnera aphidicola subsp. Baizongia pistaciae (strain Bp)).